Consider the following 453-residue polypeptide: NADH-quinone oxidoreductase subunit D (453 aa).

Residues 1–21 show a composition bias toward basic and acidic residues; that stretch reads MKDTETRPGRHRAPEPAHPEQ. The tract at residues 1-30 is disordered; sequence MKDTETRPGRHRAPEPAHPEQPDTTGDTVV.

The protein belongs to the complex I 49 kDa subunit family. NDH-1 is composed of 14 different subunits. Subunits NuoB, C, D, E, F, and G constitute the peripheral sector of the complex.

The protein localises to the cell membrane. It carries out the reaction a quinone + NADH + 5 H(+)(in) = a quinol + NAD(+) + 4 H(+)(out). Its function is as follows. NDH-1 shuttles electrons from NADH, via FMN and iron-sulfur (Fe-S) centers, to quinones in the respiratory chain. The immediate electron acceptor for the enzyme in this species is believed to be a menaquinone. Couples the redox reaction to proton translocation (for every two electrons transferred, four hydrogen ions are translocated across the cytoplasmic membrane), and thus conserves the redox energy in a proton gradient. This Nocardia farcinica (strain IFM 10152) protein is NADH-quinone oxidoreductase subunit D.